A 168-amino-acid polypeptide reads, in one-letter code: Cell division inhibitor SulA (168 aa).

The ftsZ binding stretch occupies residues 105-111 (ALLTGNY). The interval 161–168 (KIHSTLYH) is lon protease binding.

This sequence belongs to the SulA family. Interacts with FtsZ. Post-translationally, is rapidly cleaved and degraded by the Lon protease once DNA damage is repaired.

Functionally, component of the SOS system and an inhibitor of cell division. Accumulation of SulA causes rapid cessation of cell division and the appearance of long, non-septate filaments. In the presence of GTP, binds a polymerization-competent form of FtsZ in a 1:1 ratio, thus inhibiting FtsZ polymerization and therefore preventing it from participating in the assembly of the Z ring. This mechanism prevents the premature segregation of damaged DNA to daughter cells during cell division. In Pectobacterium carotovorum subsp. carotovorum (strain PC1), this protein is Cell division inhibitor SulA.